The following is a 307-amino-acid chain: UDP-3-O-acyl-N-acetylglucosamine deacetylase (307 aa).

Zn(2+) is bound by residues His78, His241, and Asp245. His268 serves as the catalytic Proton donor.

It belongs to the LpxC family. Requires Zn(2+) as cofactor.

The enzyme catalyses a UDP-3-O-[(3R)-3-hydroxyacyl]-N-acetyl-alpha-D-glucosamine + H2O = a UDP-3-O-[(3R)-3-hydroxyacyl]-alpha-D-glucosamine + acetate. The protein operates within glycolipid biosynthesis; lipid IV(A) biosynthesis; lipid IV(A) from (3R)-3-hydroxytetradecanoyl-[acyl-carrier-protein] and UDP-N-acetyl-alpha-D-glucosamine: step 2/6. Catalyzes the hydrolysis of UDP-3-O-myristoyl-N-acetylglucosamine to form UDP-3-O-myristoylglucosamine and acetate, the committed step in lipid A biosynthesis. The chain is UDP-3-O-acyl-N-acetylglucosamine deacetylase from Bordetella bronchiseptica (strain ATCC BAA-588 / NCTC 13252 / RB50) (Alcaligenes bronchisepticus).